Consider the following 118-residue polypeptide: Small ribosomal subunit protein uS13 (118 aa).

The tract at residues 94-118 is disordered; sequence SLPLRGQRTKTNARTRKGPRKPIKK.

Belongs to the universal ribosomal protein uS13 family. As to quaternary structure, part of the 30S ribosomal subunit. Forms a loose heterodimer with protein S19. Forms two bridges to the 50S subunit in the 70S ribosome.

Functionally, located at the top of the head of the 30S subunit, it contacts several helices of the 16S rRNA. In the 70S ribosome it contacts the 23S rRNA (bridge B1a) and protein L5 of the 50S subunit (bridge B1b), connecting the 2 subunits; these bridges are implicated in subunit movement. Contacts the tRNAs in the A and P-sites. The chain is Small ribosomal subunit protein uS13 from Vibrio vulnificus (strain CMCP6).